We begin with the raw amino-acid sequence, 239 residues long: IkB-like protein (239 aa).

4 ANK repeats span residues 48–77, 87–116, 124–153, and 158–187; these read NKITVFMLICIYGRLDFLRFLFKQESYPGE, DGNSAWHYLAEKNNHLLLEEVLDYFGKNGI, NGVTPIMKAAMRGRTLSVLSLLKYGANPNR, and KGFTTWDWAVFTGHADLVKTLNKGYQKPLF. Residues 81–87 carry the Nuclear localization signal motif; that stretch reads HYRRDKD. The short motif at 203–214 is the Nuclear localization signal element; sequence KKKPKIIITGCE. Positions 206 to 213 match the PxIxITxC motif; Interaction with host PPP3CA motif; it reads PKIIITGC. The FLCV motif motif lies at 228–231; it reads FLCV.

It belongs to the asfivirus A238L family. Interacts with host PPIA. Interacts with host PPP3CA/Calcineurin. Interacts with host RELA/p65; interaction of the 32 kDa form with host RELA results in the formation of a stable complex with NF-kappa-B. Interacts with host PPP3R1. Interacts with host EP300; this interaction inhibits the association of host EP300 with host RELA, JUN and NFATC2. Post-translationally, the protein exists in a 28 kDa and a 32 kDa form, probably due to post-translational modifications which are neither phosphorylation, nor sumoylation.

The protein localises to the host nucleus. It is found in the host cytoplasm. Its function is as follows. IkB-like protein that inhibits the binding of NF-kappa-B to DNA, thereby downregulating pro-inflammatory cytokine production. Forms a heterodimer with the NF-kappa-B subunit RELA/p65 and prevents the activation of the NF-kappa-B transcription factor. Inhibits calcineurin function, which is required for the induction of nuclear factor of activated T cells (NFAT)-dependent immune response genes. Prevents the binding of substrates to calcineurin without affecting the phosphatase activity. Does not contain the serine residues that are phosphorylated by host IkB kinase and thus is not degraded following stimulation of the NFkB pathway. The chain is IkB-like protein (A238L) from Ornithodoros (relapsing fever ticks).